A 99-amino-acid chain; its full sequence is uncharacterized protein (99 aa).

A signal peptide spans 1–17 (MMMNAFFPAMALMVLVG). Cys18 carries N-palmitoyl cysteine lipidation. The S-diacylglycerol cysteine moiety is linked to residue Cys18.

It is found in the cell membrane. This is an uncharacterized protein from Shigella boydii serotype 4 (strain Sb227).